The chain runs to 286 residues: Polyamine aminopropyltransferase (286 aa).

The 234-residue stretch at 5 to 238 (PLWHETLHDH…GIMTFAWASD (234 aa)) folds into the PABS domain. Gln33 is a binding site for S-methyl-5'-thioadenosine. 2 residues coordinate spermidine: His64 and Asp88. Residues Glu108 and 140–141 (DG) each bind S-methyl-5'-thioadenosine. Asp158 acts as the Proton acceptor in catalysis. 158-161 (DCTD) serves as a coordination point for spermidine. Pro165 is a binding site for S-methyl-5'-thioadenosine.

Belongs to the spermidine/spermine synthase family. As to quaternary structure, homodimer or homotetramer.

Its subcellular location is the cytoplasm. It carries out the reaction S-adenosyl 3-(methylsulfanyl)propylamine + putrescine = S-methyl-5'-thioadenosine + spermidine + H(+). It functions in the pathway amine and polyamine biosynthesis; spermidine biosynthesis; spermidine from putrescine: step 1/1. In terms of biological role, catalyzes the irreversible transfer of a propylamine group from the amino donor S-adenosylmethioninamine (decarboxy-AdoMet) to putrescine (1,4-diaminobutane) to yield spermidine. The sequence is that of Polyamine aminopropyltransferase from Klebsiella pneumoniae subsp. pneumoniae (strain ATCC 700721 / MGH 78578).